Here is a 498-residue protein sequence, read N- to C-terminus: Probable malate:quinone oxidoreductase (498 aa).

Belongs to the MQO family. FAD is required as a cofactor.

The catalysed reaction is (S)-malate + a quinone = a quinol + oxaloacetate. It participates in carbohydrate metabolism; tricarboxylic acid cycle; oxaloacetate from (S)-malate (quinone route): step 1/1. This Prochlorococcus marinus (strain MIT 9301) protein is Probable malate:quinone oxidoreductase.